Consider the following 270-residue polypeptide: MSLKPVKLAFEKYSATVAKHPPVLIFHGLLGSKRNWRSLAKKFSCKLDRDIYAIDQRCHGDSPCVAPLSYSAMALDAFQFMKDHKLDKASIIGHSMGAKTAMVTALKWPDKVEKLVVVDNSPWYQDLPRDYGAYFRKMIQIDEANITKYSEADKMMSTVEKDILVRSFLLSNLKKDSNNSNTFKFRVPIELISKSLKTIEGFPASLNDLVYDSPTLVIRALKAPFIPDSALPVFKKFFPKYELVSLDCGHWVHFEKPKEFSESIINFLNN.

The region spanning 21–257 (PPVLIFHGLL…CGHWVHFEKP (237 aa)) is the AB hydrolase-1 domain. Catalysis depends on charge relay system residues serine 95, glutamate 190, and histidine 250.

Belongs to the AB hydrolase superfamily.

It is found in the mitochondrion. This is Abhydrolase domain-containing protein C22H12.03 from Schizosaccharomyces pombe (strain 972 / ATCC 24843) (Fission yeast).